Consider the following 346-residue polypeptide: Glucose-6-phosphatase 3 (346 aa).

Residues 1-24 (MESTLSAGIIMAEALQNRLPGLEN) are Lumenal-facing. The chain crosses the membrane as a helical span at residues 25–45 (MWLWVTFLGDPKNLFQFCFPA). At 46 to 56 (AYYASRRLGIS) the chain is on the cytoplasmic side. Residues 57 to 77 (VLWITFIAEWLNLVFKWFLFG) form a helical membrane-spanning segment. Residues 78 to 108 (DRPFWWVHESGYSTQTPIQIHQFPSSCETGP) are Lumenal-facing. R79 lines the substrate pocket. A helical transmembrane segment spans residues 109–129 (GSPSGHCMITGAALWPVMTAI). Catalysis depends on H114, which acts as the Proton donor. The Cytoplasmic segment spans residues 130 to 138 (SSQVASRSR). The chain crosses the membrane as a helical span at residues 139 to 159 (SPWVRVIPGLAYCTFLLAVGL). Topologically, residues 160–167 (SRVFLLAH) are lumenal. R161 contributes to the substrate binding site. The active-site Nucleophile is H167. A helical membrane pass occupies residues 168 to 186 (FPHQVLGGLIVGAALGWLM). At 187-197 (SPRVPMERELS) the chain is on the cytoplasmic side. A helical membrane pass occupies residues 198 to 218 (FYGLTALALMLGASLMYWTLF). Topologically, residues 219–254 (TLGLDLSWSINLASKWCERPEWVHMDSRPFASLSRD) are lumenal. The chain crosses the membrane as a helical span at residues 255–273 (SGSALGLGIALHTPCYAQI). Over 274–283 (RRAHLGNGQK) the chain is Cytoplasmic. Residues 284–304 (IACFVLAMGLLVFLEWLGYPP) form a helical membrane-spanning segment. Residues 305-307 (QIS) lie on the Lumenal side of the membrane. A helical transmembrane segment spans residues 308-328 (LFYIFNFLKYTLWPCLVLALV). The Cytoplasmic portion of the chain corresponds to 329 to 346 (PWVVHTLSDQEAPPIRSS).

It belongs to the glucose-6-phosphatase family. Widely expressed. Highly expressed in heart and testis and to a lower extent in spleen, stomach, small intestine, skeletal muscle and uterus. Expressed in muscle, brain, thymus, lung, kidney, spleen and pancreas (at protein level). In the brain, expressed in astrocytes (at protein level).

It is found in the endoplasmic reticulum membrane. The enzyme catalyses D-glucose 6-phosphate + H2O = D-glucose + phosphate. The protein operates within carbohydrate biosynthesis; gluconeogenesis. With respect to regulation, inhibited by vanadate. In terms of biological role, hydrolyzes glucose-6-phosphate to glucose in the endoplasmic reticulum. May form with the glucose-6-phosphate transporter (SLC37A4/G6PT) a ubiquitously expressed complex responsible for glucose production through glycogenolysis and gluconeogenesis. Probably required for normal neutrophil function. The chain is Glucose-6-phosphatase 3 (G6pc3) from Mus musculus (Mouse).